The primary structure comprises 99 residues: Malonate decarboxylase acyl carrier protein (99 aa).

Residue Ser-25 is modified to O-(phosphoribosyl dephospho-coenzyme A)serine.

Belongs to the MdcC family. Post-translationally, covalently binds the prosthetic group of malonate decarboxylase.

Its subcellular location is the cytoplasm. Subunit of malonate decarboxylase, it is an acyl carrier protein to which acetyl and malonyl thioester residues are bound via a 2'-(5''-phosphoribosyl)-3'-dephospho-CoA prosthetic group and turn over during the catalytic mechanism. The protein is Malonate decarboxylase acyl carrier protein of Azotobacter vinelandii (strain DJ / ATCC BAA-1303).